A 314-amino-acid chain; its full sequence is Taste receptor type 2 member 42 (314 aa).

Residues 1–7 (MATELDK) lie on the Extracellular side of the membrane. Residues 8–28 (IFLILAIAEFIISMLGNVFIG) form a helical membrane-spanning segment. Residues 29–50 (LVNCSEGIKNQKVFSADFILTC) are Cytoplasmic-facing. Residues 51 to 71 (LAISTIGQLLVILFDSFLVGL) traverse the membrane as a helical segment. Residues 72–101 (ASHLYTTYRLGKTVIMLWHMTNHLTTWLAT) are Extracellular-facing. A helical membrane pass occupies residues 102–122 (CLSIFYFFKIAHFPHSLFLWL). The Cytoplasmic segment spans residues 123–127 (RWRMN). A helical transmembrane segment spans residues 128-148 (GMIVMLLILSLFLLIFDSLVL). Topologically, residues 149-187 (EIFIDISLNIIDKSNLTLYLDESKTLYDKLSILKTLLSL) are extracellular. Asn-163 carries an N-linked (GlcNAc...) asparagine glycan. A helical transmembrane segment spans residues 188–208 (TSFIPFSLFLTSLLFLFLSLV). Over 209-238 (RHTRNLKLSSLGSRDSSTEAHRRAMKMVMS) the chain is Cytoplasmic. Residues 239-259 (FLFLFIVHFFSLQVANWIFFM) form a helical membrane-spanning segment. Residues 260-265 (LWNNKC) are Extracellular-facing. A helical membrane pass occupies residues 266–286 (IKFVMLALNAFPSCHSFILIL). At 287-314 (GNSKLQQTAVRLLWHLRNYTKTPNPLPL) the chain is on the cytoplasmic side.

Belongs to the G-protein coupled receptor T2R family.

The protein localises to the membrane. Receptor that may play a role in the perception of bitterness and is gustducin-linked. May play a role in sensing the chemical composition of the gastrointestinal content. The activity of this receptor may stimulate alpha gustducin, mediate PLC-beta-2 activation and lead to the gating of TRPM5. This is Taste receptor type 2 member 42 (TAS2R42) from Homo sapiens (Human).